A 392-amino-acid chain; its full sequence is Trans-2-enoyl-CoA reductase [NADH] (392 aa).

NAD(+) contacts are provided by residues 74–75, 111–112, and 141–142; these read FE, DA, and LA. Position 227 (Tyr-227) interacts with substrate. The Proton donor role is filled by Tyr-237. Residues Lys-246 and 276 to 278 contribute to the NAD(+) site; that span reads VVT.

Belongs to the TER reductase family. As to quaternary structure, monomer.

The catalysed reaction is a 2,3-saturated acyl-CoA + NAD(+) = a (2E)-enoyl-CoA + NADH + H(+). The protein operates within lipid metabolism; fatty acid biosynthesis. In terms of biological role, involved in the fatty acid synthesis (FAS II). Catalyzes the reduction of a carbon-carbon double bond in an enoyl moiety that is covalently linked to a coenzyme A (CoA). This Brachyspira hyodysenteriae (strain ATCC 49526 / WA1) protein is Trans-2-enoyl-CoA reductase [NADH].